Reading from the N-terminus, the 757-residue chain is RNA cytosine C(5)-methyltransferase NSUN2 (757 aa).

Residues 1–35 (MGRRARGRRFQQPPQPEGEEDASDGGRKRGQAGWE) are disordered. Position 23 is a phosphoserine (Ser-23). Lys-46 participates in a covalent cross-link: Glycyl lysine isopeptide (Lys-Gly) (interchain with G-Cter in SUMO2). Ser-139 is modified (phosphoserine; by AURKB). Residues 184–190 (CAAPGSK), Asp-215, Asp-242, and Asp-268 contribute to the S-adenosyl-L-methionine site. The Nucleophile role is filled by Cys-321. The interval 436–504 (NKRQPKVQNK…EKKDGVCGPP (69 aa)) is disordered. Residues Ser-456 and Ser-473 each carry the phosphoserine modification. Residues 463–476 (GNPSDQSELESQMI) show a composition bias toward polar residues. Glycyl lysine isopeptide (Lys-Gly) (interchain with G-Cter in SUMO2) cross-links involve residues Lys-510 and Lys-515. The residue at position 585 (Lys-585) is an N6-acetyllysine; alternate. At Lys-585 the chain carries N6-malonyllysine; alternate. Lys-585 is covalently cross-linked (Glycyl lysine isopeptide (Lys-Gly) (interchain with G-Cter in SUMO2); alternate). A Phosphoserine modification is found at Ser-592. Glycyl lysine isopeptide (Lys-Gly) (interchain with G-Cter in SUMO2) cross-links involve residues Lys-639, Lys-653, and Lys-659. The interval 716–757 (LTNENAASPEQPGDEDAKQTAQDPCVPDSVPGCDAAAAEPSR) is disordered. Thr-717 carries the phosphothreonine modification. Phosphoserine is present on Ser-723.

It belongs to the class I-like SAM-binding methyltransferase superfamily. RsmB/NOP family. TRM4 subfamily. In terms of assembly, interacts with NPM1 and NCL during interphase; interaction is disrupted following phosphorylation at Ser-139. Post-translationally, phosphorylated at Ser-139 by AURKB during mitosis, leading to abolish methyltransferase activity and the interaction with NPM1. As to expression, ubiquitously expressed at low level. Up-regulated in tumors. Dynamically expressed during morphogenesis and in adult skin: in adult skin, expression is up-regulated in the bulge and hair germ as soon as the hair follicle enters its growing phase (anagen). During anagen, expressed at highest level in cells of the hair germ that give rise to the hair matrix.

The protein localises to the nucleus. Its subcellular location is the nucleolus. It is found in the cytoplasm. It localises to the mitochondrion. The protein resides in the cytoskeleton. The protein localises to the spindle. Its subcellular location is the secreted. It is found in the extracellular exosome. The enzyme catalyses cytidine(48) in tRNA + S-adenosyl-L-methionine = 5-methylcytidine(48) in tRNA + S-adenosyl-L-homocysteine + H(+). It carries out the reaction cytidine(49) in tRNA + S-adenosyl-L-methionine = 5-methylcytidine(49) in tRNA + S-adenosyl-L-homocysteine + H(+). The catalysed reaction is cytidine(50) in tRNA + S-adenosyl-L-methionine = 5-methylcytidine(50) in tRNA + S-adenosyl-L-homocysteine + H(+). It catalyses the reaction cytidine(34) in tRNA precursor + S-adenosyl-L-methionine = 5-methylcytidine(34) in tRNA precursor + S-adenosyl-L-homocysteine + H(+). The enzyme catalyses a cytidine in mRNA + S-adenosyl-L-methionine = a 5-methylcytidine in mRNA + S-adenosyl-L-homocysteine + H(+). Its activity is regulated as follows. Inhibited by magnesium ions. Its function is as follows. RNA cytosine C(5)-methyltransferase that methylates cytosine to 5-methylcytosine (m5C) in various RNAs, such as tRNAs, mRNAs and some long non-coding RNAs (lncRNAs). Involved in various processes, such as epidermal stem cell differentiation, testis differentiation and maternal to zygotic transition during early development: acts by increasing protein synthesis; cytosine C(5)-methylation promoting tRNA stability and preventing mRNA decay. Methylates cytosine to 5-methylcytosine (m5C) at positions 34 and 48 of intron-containing tRNA(Leu)(CAA) precursors, and at positions 48, 49 and 50 of tRNA(Gly)(GCC) precursors. tRNA methylation is required generation of RNA fragments derived from tRNAs (tRFs). Also mediates C(5)-methylation of mitochondrial tRNAs. Catalyzes cytosine C(5)-methylation of mRNAs, leading to stabilize them and prevent mRNA decay: mRNA stabilization involves YBX1 that specifically recognizes and binds m5C-modified transcripts. Cytosine C(5)-methylation of mRNAs also regulates mRNA export: methylated transcripts are specifically recognized by THOC4/ALYREF, which mediates mRNA nucleo-cytoplasmic shuttling. Also mediates cytosine C(5)-methylation of non-coding RNAs, such as vault RNAs (vtRNAs), promoting their processing into regulatory small RNAs. Cytosine C(5)-methylation of vtRNA VTRNA1.1 promotes its processing into small-vault RNA4 (svRNA4) and regulates epidermal differentiation. May act downstream of Myc to regulate epidermal cell growth and proliferation. Required for proper spindle assembly and chromosome segregation, independently of its methyltransferase activity. This is RNA cytosine C(5)-methyltransferase NSUN2 from Mus musculus (Mouse).